We begin with the raw amino-acid sequence, 519 residues long: Cyclic AMP-responsive element-binding protein 3-like protein 1 (519 aa).

The segment at 1–60 is required for transcriptional activation; it reads MDAVLEPFPADRLFPGSSFLDLGDLNESDFLNNAHFPEHLDHFTENMEDFSNDLFSSFFD. The Cytoplasmic portion of the chain corresponds to 1 to 374; that stretch reads MDAVLEPFPA…YKMAATQTGT (374 aa). A disordered region spans residues 71–98; sequence LDMELDSPTPGIQAEHSYSLSGDSAPQS. Over residues 86 to 97 the composition is skewed to polar residues; that stretch reads HSYSLSGDSAPQ. Residue Lys184 forms a Glycyl lysine isopeptide (Lys-Gly) (interchain with G-Cter in SUMO2) linkage. The disordered stretch occupies residues 200-259; sequence DLVQMPPTPPSSHGSDSDGSQSPRSLPPSSPVRPMARSSTAISTSPLLTAPHKLQGTSGP. Positions 210 to 223 are enriched in low complexity; that stretch reads SSHGSDSDGSQSPR. Residues 236 to 246 show a composition bias toward polar residues; sequence RSSTAISTSPL. Residues 290–353 form the bZIP domain; the sequence is ALKRVRRKIK…RTLLQQLQKL (64 aa). A basic motif region spans residues 292–321; that stretch reads KRVRRKIKNKISAQESRRKKKEYVECLEKK. Residues 332–353 are leucine-zipper; the sequence is LWKKVETLENANRTLLQQLQKL. Residues 375–395 form a helical; Signal-anchor for type II membrane protein membrane-spanning segment; sequence CLMVAALCFVLVLGSLVPCLP. The MBTPS2 recognition motif lies at 392–395; it reads PCLP. The Lumenal segment spans residues 396 to 519; that stretch reads EFSSGSQTVK…LGPNTTIKLS (124 aa). Residues 423–426 carry the MBTPS1 recognition motif; it reads RSLL. The interval 484–519 is disordered; sequence EAWPKDGGNGTSPDFSHSKEWFHDRDLGPNTTIKLS. A glycan (N-linked (GlcNAc...) asparagine) is linked at Asn492. Basic and acidic residues predominate over residues 499–510; that stretch reads SHSKEWFHDRDL. Asn513 is a glycosylation site (N-linked (GlcNAc...) asparagine).

Belongs to the bZIP family. ATF subfamily. As to quaternary structure, interacts with SMAD4, the interaction takes place upon TGFB1 induction and SMAD4 acts as a CREB3L1 coactivator to induce the expression of genes involved in assembly of collagen extracellular matrix. In terms of processing, upon ER stress or DNA damage, translocated to the Golgi apparatus, where it is processed by regulated intramembrane proteolysis (RIP) to release the cytosol-facing N-terminal transcription factor domain. The cleavage is performed sequentially by site-1 and site-2 proteases (S1P/MBTPS1 and S2P/MBTPS2). RIP is induced by TGFB1 and ceramide. N-glycosylated. Post-translationally, ubiquitinated by HRD1/SYVN1; undergoes 'Lys-48'-linked ubiquitination, followed by rapid proteasomal degradation under normal conditions. Upon ER stress, SYVN1 E3 ubiquitin-protein ligase dissociates from its substrate, ubiquitination does not occur and CREB3L1 is stabilized. In terms of tissue distribution, expressed in several tissues, with highest levels in pancreas and prostate. Expressed at relatively lower levels in brain.

The protein localises to the endoplasmic reticulum membrane. It localises to the nucleus. Precursor of the transcription factor form (Processed cyclic AMP-responsive element-binding protein 3-like protein 1), which is embedded in the endoplasmic reticulum membrane with N-terminal DNA-binding and transcription activation domains oriented toward the cytosolic face of the membrane. In response to ER stress or DNA damage, transported to the Golgi, where it is cleaved in a site-specific manner by resident proteases S1P/MBTPS1 and S2P/MBTPS2. The released N-terminal cytosolic domain is translocated to the nucleus where it activates transcription of specific target genes involved in the cell-cycle progression inhibition. Its function is as follows. Transcription factor involved in cell type specific DNA damage and unfolded protein response (UPR). Binds the DNA consensus sequence 5'-GTGXGCXGC-3'. Plays a critical role in bone formation through the transcription of COL1A1, and possibly COL1A2, and the secretion of bone matrix proteins. Directly binds to the UPR element (UPRE)-like sequence in an osteoblast-specific COL1A1 promoter region and induces its transcription. Does not regulate COL1A1 in other tissues, such as skin. Required to protect astrocytes from ER stress-induced cell death. In astrocytes, binds to the cAMP response element (CRE) of the BiP/HSPA5 promoter and participate in its transcriptional activation. In astrocytes and osteoblasts, upon DNA damage, inhibits cell-cycle progression after G2/M phase by binding to promoters and activating transcription of genes encoding cell-cycle inhibitors, such as p21/CDKN1A. Required for TGFB1 to activate genes involved in the assembly of collagen extracellular matrix. In terms of biological role, (Microbial infection) May play a role in limiting virus spread by inhibiting proliferation of virus-infected cells. Upon infection with diverse DNA and RNA viruses, inhibits cell-cycle progression by binding to promoters and activating transcription of genes encoding cell-cycle inhibitors, such as p21/CDKN1A. The protein is Cyclic AMP-responsive element-binding protein 3-like protein 1 of Homo sapiens (Human).